The primary structure comprises 190 residues: Elongation factor P-like protein (190 aa).

This sequence belongs to the elongation factor P family.

This chain is Elongation factor P-like protein, found in Pectobacterium atrosepticum (strain SCRI 1043 / ATCC BAA-672) (Erwinia carotovora subsp. atroseptica).